Reading from the N-terminus, the 430-residue chain is MDRIRIVGGNKLAGSIPISGAKNAALPLMIASLLTDDTLTLENVPHLADVEQLIRILGNHGVDYSVNGRREKQNEGYSRTINFSARNIVDTTAPYELVSKMRASFWVIGPLLARMGEAKVSLPGGCAIGTRPVDLFLEGLQALGADLDVDTGYVIAKTKNGRLVGNRYVFPKVSVGATHVLMMAASLAKGETVLENAACEPEIVNLAECLNAMGARISGAGTPTITIDGVESLSGARVRVIPDRIETGTYAMAVAMTGGDVVLEGARPELLQTALDVISQTGAEITQTNSGIRVKRNGAGISPVDVTTAPFPAFPTDLQAQFMGLMTMAKGKSRITETIFENRFMHVQELARLGAHITLSGQTAIVDGVAKLKGAPVMATDLRASVSLVIAGLAAEGETTVNRVYHLDRGFERLEEKLSNCGAVIERISA.

22–23 (KN) serves as a coordination point for phosphoenolpyruvate. Residue Arg-102 participates in UDP-N-acetyl-alpha-D-glucosamine binding. Catalysis depends on Cys-126, which acts as the Proton donor. Cys-126 bears the 2-(S-cysteinyl)pyruvic acid O-phosphothioketal mark. Residues 131–135 (RPVDL), 172–175 (KVSV), Asp-317, and Ile-339 each bind UDP-N-acetyl-alpha-D-glucosamine.

Belongs to the EPSP synthase family. MurA subfamily.

Its subcellular location is the cytoplasm. It carries out the reaction phosphoenolpyruvate + UDP-N-acetyl-alpha-D-glucosamine = UDP-N-acetyl-3-O-(1-carboxyvinyl)-alpha-D-glucosamine + phosphate. Its pathway is cell wall biogenesis; peptidoglycan biosynthesis. Functionally, cell wall formation. Adds enolpyruvyl to UDP-N-acetylglucosamine. This is UDP-N-acetylglucosamine 1-carboxyvinyltransferase 1 from Mesorhizobium japonicum (strain LMG 29417 / CECT 9101 / MAFF 303099) (Mesorhizobium loti (strain MAFF 303099)).